The sequence spans 163 residues: Single-stranded DNA-binding protein 1 (163 aa).

In terms of domain architecture, SSB spans 1 to 104 (MINNVVLVGR…VVAESFQLLE (104 aa)). Positions 106–163 (RATREGGSPNSYNNGGYNNAPSNNSYSASSQQTPNFSRDESPFGNSNPMDISDDDLPF) are disordered. Over residues 111 to 135 (GGSPNSYNNGGYNNAPSNNSYSASS) the composition is skewed to low complexity. The short motif at 158–163 (DDDLPF) is the Important for interaction with partner proteins element.

As to quaternary structure, homotetramer.

Its function is as follows. Plays an important role in DNA replication, recombination and repair. Binds to ssDNA and to an array of partner proteins to recruit them to their sites of action during DNA metabolism. The polypeptide is Single-stranded DNA-binding protein 1 (ssb1) (Streptococcus agalactiae serotype III (strain NEM316)).